Reading from the N-terminus, the 91-residue chain is Small ribosomal subunit protein uS19 (91 aa).

Belongs to the universal ribosomal protein uS19 family.

Protein S19 forms a complex with S13 that binds strongly to the 16S ribosomal RNA. In Pseudomonas fluorescens (strain SBW25), this protein is Small ribosomal subunit protein uS19.